A 267-amino-acid polypeptide reads, in one-letter code: 2-keto-3-deoxy-L-rhamnonate aldolase (267 aa).

Residue His-49 is the Proton acceptor of the active site. Gln-151 is a binding site for substrate. A Mg(2+)-binding site is contributed by Glu-153. Substrate is bound by residues Ala-178 and Asp-179. Asp-179 contacts Mg(2+).

The protein belongs to the HpcH/HpaI aldolase family. KDR aldolase subfamily. Homohexamer. It depends on Mg(2+) as a cofactor.

The catalysed reaction is 2-dehydro-3-deoxy-L-rhamnonate = (S)-lactaldehyde + pyruvate. Catalyzes the reversible retro-aldol cleavage of 2-keto-3-deoxy-L-rhamnonate (KDR) to pyruvate and lactaldehyde. In Shigella dysenteriae serotype 1 (strain Sd197), this protein is 2-keto-3-deoxy-L-rhamnonate aldolase.